A 256-amino-acid chain; its full sequence is Probable sulfite/organosulfonate exporter TauE (256 aa).

8 consecutive transmembrane segments (helical) span residues 5 to 25 (LLLP…FQTV), 33 to 53 (IVMG…AAVV), 76 to 96 (AVAA…LVLE), 103 to 123 (ATLL…SAAL), 142 to 162 (VFGG…IFQF), 172 to 190 (IRCA…RTLF), 199 to 219 (AAVC…TLLG), and 236 to 256 (FGVL…AWVL).

The protein belongs to the 4-toluene sulfonate uptake permease (TSUP) (TC 2.A.102) family.

The protein resides in the cell inner membrane. Could be a sulfite/organosulfonate exporter with a wide substrate range, including 3-sulfolactate and 3-sulfopyruvate. The protein is Probable sulfite/organosulfonate exporter TauE of Cupriavidus necator (strain ATCC 17699 / DSM 428 / KCTC 22496 / NCIMB 10442 / H16 / Stanier 337) (Ralstonia eutropha).